A 715-amino-acid chain; its full sequence is Scinderin (715 aa).

An actin-severing region spans residues 1–363 (MAQGLYHEEF…DGFGKVYVTE (363 aa)). The stretch at 27 to 77 (LELVPVPESAYGNFYVGDAYLVLHTTQASRGFTYRLHFWLGKECTQDESTA) is one Gelsolin-like 1 repeat. The residue at position 102 (Tyr102) is a Phosphotyrosine. A 1,2-diacyl-sn-glycero-3-phospho-(1D-myo-inositol-4,5-bisphosphate) is bound by residues 112 to 119 (KGGLKYKA) and 138 to 146 (RLLHVKGRR). Gelsolin-like repeat units lie at residues 148-188 (VRAT…YERL), 265-307 (LVAE…QERK), 398-451 (VQIW…DELT), and 523-564 (TRIM…EEEK). The actin-binding, Ca-sensitive stretch occupies residues 364-715 (KVAHVKQIPF…WFLGWDSSRW (352 aa)). Residues 364 to 715 (KVAHVKQIPF…WFLGWDSSRW (352 aa)) are ca(2+)-dependent actin binding. Residues Asn538, Asp539, and Glu562 each coordinate Ca(2+). At Tyr599 the chain carries Phosphotyrosine. Residues 626–668 (FIIEEVPGEFTQDDLAEDDVMLLDAWEQIFIWIGKDANEVEKS) form a Gelsolin-like 6 repeat. Asp643, Asp644, and Glu666 together coordinate Ca(2+).

It belongs to the villin/gelsolin family. In terms of processing, the N-terminus is blocked. In terms of tissue distribution, in the adrenal gland, expressed in the medulla but, in the cortex, found only in diffuse parts.

The protein localises to the cytoplasm. It is found in the cytoskeleton. Its subcellular location is the cell projection. It localises to the podosome. Its function is as follows. Ca(2+)-dependent actin filament-severing protein that has a regulatory function in exocytosis by affecting the organization of the microfilament network underneath the plasma membrane. In vitro, also has barbed end capping and nucleating activities in the presence of Ca(2+). Severing activity is inhibited by phosphatidylinositol 4,5-bis-phosphate (PIP2). Required for megakaryocyte differentiation, maturation, polyploidization and apoptosis with the release of platelet-like particles. Plays a role in osteoclastogenesis (OCG) and actin cytoskeletal organization in osteoclasts. Regulates chondrocyte proliferation and differentiation. Inhibits cell proliferation and tumorigenesis. Signaling is mediated by MAPK, p38 and JNK pathways. The chain is Scinderin from Bos taurus (Bovine).